The chain runs to 468 residues: uncharacterized protein (468 aa).

The N-terminal stretch at 1 to 19 is a signal peptide; sequence MRVLSVLLVALTVAGSAYS. N-linked (GlcNAc...) asparagine glycosylation is found at N86 and N334. Residues 401 to 421 form a disordered region; it reads NPSTNLPETSPPTEQPTAPPA. Positions 409 to 421 are enriched in pro residues; the sequence is TSPPTEQPTAPPA. N-linked (GlcNAc...) asparagine glycosylation occurs at N435. N444 is lipidated: GPI-like-anchor amidated asparagine. Residues 445–468 constitute a propeptide, removed in mature form; the sequence is SASSIEMSKLVVAILSLFILAFFH.

Its subcellular location is the cell membrane. This is an uncharacterized protein from Dictyostelium discoideum (Social amoeba).